A 238-amino-acid polypeptide reads, in one-letter code: Uridylate kinase (238 aa).

12-15 (KLSG) serves as a coordination point for ATP. The interval 20–25 (GEKGFG) is involved in allosteric activation by GTP. Glycine 54 serves as a coordination point for UMP. ATP contacts are provided by glycine 55 and arginine 59. UMP is bound by residues aspartate 74 and 135–142 (TGSPYFST). Residues asparagine 163, tyrosine 169, and aspartate 172 each contribute to the ATP site.

The protein belongs to the UMP kinase family. As to quaternary structure, homohexamer.

Its subcellular location is the cytoplasm. It catalyses the reaction UMP + ATP = UDP + ADP. The protein operates within pyrimidine metabolism; CTP biosynthesis via de novo pathway; UDP from UMP (UMPK route): step 1/1. Allosterically activated by GTP. Inhibited by UTP. Catalyzes the reversible phosphorylation of UMP to UDP. This is Uridylate kinase from Lactococcus lactis subsp. lactis (strain IL1403) (Streptococcus lactis).